A 318-amino-acid polypeptide reads, in one-letter code: Thymidylate synthase (318 aa).

Residues R25 and 180–181 contribute to the dUMP site; that span reads RR. Residue C200 is the Nucleophile of the active site. DUMP contacts are provided by residues 220-223, N231, and 261-263; these read RSGD and HIY. D223 is a (6R)-5,10-methylene-5,6,7,8-tetrahydrofolate binding site. Position 317 (A317) interacts with (6R)-5,10-methylene-5,6,7,8-tetrahydrofolate.

This sequence belongs to the thymidylate synthase family. Bacterial-type ThyA subfamily. Homodimer.

The protein localises to the cytoplasm. The catalysed reaction is dUMP + (6R)-5,10-methylene-5,6,7,8-tetrahydrofolate = 7,8-dihydrofolate + dTMP. Its pathway is pyrimidine metabolism; dTTP biosynthesis. In terms of biological role, catalyzes the reductive methylation of 2'-deoxyuridine-5'-monophosphate (dUMP) to 2'-deoxythymidine-5'-monophosphate (dTMP) while utilizing 5,10-methylenetetrahydrofolate (mTHF) as the methyl donor and reductant in the reaction, yielding dihydrofolate (DHF) as a by-product. This enzymatic reaction provides an intracellular de novo source of dTMP, an essential precursor for DNA biosynthesis. This chain is Thymidylate synthase, found in Lactobacillus acidophilus (strain ATCC 700396 / NCK56 / N2 / NCFM).